The primary structure comprises 193 residues: N-(5'-phosphoribosyl)anthranilate isomerase (193 aa).

Belongs to the TrpF family.

It carries out the reaction N-(5-phospho-beta-D-ribosyl)anthranilate = 1-(2-carboxyphenylamino)-1-deoxy-D-ribulose 5-phosphate. Its pathway is amino-acid biosynthesis; L-tryptophan biosynthesis; L-tryptophan from chorismate: step 3/5. The sequence is that of N-(5'-phosphoribosyl)anthranilate isomerase from Streptococcus mutans serotype c (strain ATCC 700610 / UA159).